We begin with the raw amino-acid sequence, 612 residues long: Dihydroxy-acid dehydratase (612 aa).

Aspartate 81 contributes to the Mg(2+) binding site. Cysteine 122 serves as a coordination point for [2Fe-2S] cluster. Positions 123 and 124 each coordinate Mg(2+). The residue at position 124 (lysine 124) is an N6-carboxylysine. Cysteine 195 contacts [2Fe-2S] cluster. Glutamate 491 contributes to the Mg(2+) binding site. The active-site Proton acceptor is serine 517.

The protein belongs to the IlvD/Edd family. As to quaternary structure, homodimer. [2Fe-2S] cluster serves as cofactor. The cofactor is Mg(2+).

The catalysed reaction is (2R)-2,3-dihydroxy-3-methylbutanoate = 3-methyl-2-oxobutanoate + H2O. The enzyme catalyses (2R,3R)-2,3-dihydroxy-3-methylpentanoate = (S)-3-methyl-2-oxopentanoate + H2O. The protein operates within amino-acid biosynthesis; L-isoleucine biosynthesis; L-isoleucine from 2-oxobutanoate: step 3/4. It functions in the pathway amino-acid biosynthesis; L-valine biosynthesis; L-valine from pyruvate: step 3/4. Functionally, functions in the biosynthesis of branched-chain amino acids. Catalyzes the dehydration of (2R,3R)-2,3-dihydroxy-3-methylpentanoate (2,3-dihydroxy-3-methylvalerate) into 2-oxo-3-methylpentanoate (2-oxo-3-methylvalerate) and of (2R)-2,3-dihydroxy-3-methylbutanoate (2,3-dihydroxyisovalerate) into 2-oxo-3-methylbutanoate (2-oxoisovalerate), the penultimate precursor to L-isoleucine and L-valine, respectively. This Bartonella henselae (strain ATCC 49882 / DSM 28221 / CCUG 30454 / Houston 1) (Rochalimaea henselae) protein is Dihydroxy-acid dehydratase.